The primary structure comprises 173 residues: Crossover junction endodeoxyribonuclease RuvC (173 aa).

Catalysis depends on residues D10, E71, and D143. The Mg(2+) site is built by D10, E71, and D143.

This sequence belongs to the RuvC family. In terms of assembly, homodimer which binds Holliday junction (HJ) DNA. The HJ becomes 2-fold symmetrical on binding to RuvC with unstacked arms; it has a different conformation from HJ DNA in complex with RuvA. In the full resolvosome a probable DNA-RuvA(4)-RuvB(12)-RuvC(2) complex forms which resolves the HJ. Mg(2+) serves as cofactor.

The protein localises to the cytoplasm. The catalysed reaction is Endonucleolytic cleavage at a junction such as a reciprocal single-stranded crossover between two homologous DNA duplexes (Holliday junction).. The RuvA-RuvB-RuvC complex processes Holliday junction (HJ) DNA during genetic recombination and DNA repair. Endonuclease that resolves HJ intermediates. Cleaves cruciform DNA by making single-stranded nicks across the HJ at symmetrical positions within the homologous arms, yielding a 5'-phosphate and a 3'-hydroxyl group; requires a central core of homology in the junction. The consensus cleavage sequence is 5'-(A/T)TT(C/G)-3'. Cleavage occurs on the 3'-side of the TT dinucleotide at the point of strand exchange. HJ branch migration catalyzed by RuvA-RuvB allows RuvC to scan DNA until it finds its consensus sequence, where it cleaves and resolves the cruciform DNA. The chain is Crossover junction endodeoxyribonuclease RuvC from Gloeobacter violaceus (strain ATCC 29082 / PCC 7421).